The sequence spans 359 residues: Phosphoserine aminotransferase (359 aa).

Arg41 is an L-glutamate binding site. Residues 75 to 76 (AS), Trp101, Thr152, Asp171, and Gln194 each bind pyridoxal 5'-phosphate. An N6-(pyridoxal phosphate)lysine modification is found at Lys195. 236–237 (NT) contacts pyridoxal 5'-phosphate.

The protein belongs to the class-V pyridoxal-phosphate-dependent aminotransferase family. SerC subfamily. In terms of assembly, homodimer. It depends on pyridoxal 5'-phosphate as a cofactor.

It localises to the cytoplasm. It carries out the reaction O-phospho-L-serine + 2-oxoglutarate = 3-phosphooxypyruvate + L-glutamate. The catalysed reaction is 4-(phosphooxy)-L-threonine + 2-oxoglutarate = (R)-3-hydroxy-2-oxo-4-phosphooxybutanoate + L-glutamate. Its pathway is amino-acid biosynthesis; L-serine biosynthesis; L-serine from 3-phospho-D-glycerate: step 2/3. The protein operates within cofactor biosynthesis; pyridoxine 5'-phosphate biosynthesis; pyridoxine 5'-phosphate from D-erythrose 4-phosphate: step 3/5. Functionally, catalyzes the reversible conversion of 3-phosphohydroxypyruvate to phosphoserine and of 3-hydroxy-2-oxo-4-phosphonooxybutanoate to phosphohydroxythreonine. In Acinetobacter baumannii (strain ACICU), this protein is Phosphoserine aminotransferase.